The following is a 353-amino-acid chain: Aliphatic aldoxime dehydratase (353 aa).

Ser219 lines the an aliphatic aldoxime pocket. His299 contacts heme b. His320 lines the an aliphatic aldoxime pocket. His320 is an active-site residue.

This sequence belongs to the heme-containing dehydratase family. Homodimer. Requires heme b as cofactor.

The catalysed reaction is an aliphatic aldoxime = a nitrile + H2O. Active when the heme iron is in the ferrous state. Activated by FMN, Fe(2+), Sn(2+), Na(2)SO(3), Na(2)S and vitamin K3. Its function is as follows. Catalyzes the dehydration of aldoximes to their corresponding nitrile. Is active toward various arylalkyl- and alkyl-aldoximes, and to a lesser extent toward aryl-aldoximes. In Rhodococcus globerulus, this protein is Aliphatic aldoxime dehydratase.